The sequence spans 268 residues: Glucosamine-6-phosphate deaminase (268 aa).

The active-site Proton acceptor; for enolization step is D67. The For ring-opening step role is filled by N136. The active-site Proton acceptor; for ring-opening step is H138. The active-site For ring-opening step is E143.

Belongs to the glucosamine/galactosamine-6-phosphate isomerase family. NagB subfamily. In terms of assembly, homohexamer.

It catalyses the reaction alpha-D-glucosamine 6-phosphate + H2O = beta-D-fructose 6-phosphate + NH4(+). It participates in amino-sugar metabolism; N-acetylneuraminate degradation; D-fructose 6-phosphate from N-acetylneuraminate: step 5/5. Catalyzes the reversible isomerization-deamination of glucosamine 6-phosphate (GlcN6P) to form fructose 6-phosphate (Fru6P) and ammonium ion. The protein is Glucosamine-6-phosphate deaminase of Shewanella loihica (strain ATCC BAA-1088 / PV-4).